Reading from the N-terminus, the 150-residue chain is Nucleoside diphosphate kinase (150 aa).

Lysine 9, phenylalanine 57, arginine 85, threonine 91, arginine 102, and asparagine 112 together coordinate ATP. Histidine 115 acts as the Pros-phosphohistidine intermediate in catalysis.

It belongs to the NDK family. Homotetramer. It depends on Mg(2+) as a cofactor.

Its subcellular location is the cytoplasm. It carries out the reaction a 2'-deoxyribonucleoside 5'-diphosphate + ATP = a 2'-deoxyribonucleoside 5'-triphosphate + ADP. The enzyme catalyses a ribonucleoside 5'-diphosphate + ATP = a ribonucleoside 5'-triphosphate + ADP. Major role in the synthesis of nucleoside triphosphates other than ATP. The ATP gamma phosphate is transferred to the NDP beta phosphate via a ping-pong mechanism, using a phosphorylated active-site intermediate. This Symbiobacterium thermophilum (strain DSM 24528 / JCM 14929 / IAM 14863 / T) protein is Nucleoside diphosphate kinase.